Consider the following 361-residue polypeptide: Chorismate synthase (361 aa).

NADP(+) is bound by residues Arg-48 and Arg-54. Residues 125-127 (RSS), 238-239 (NA), Gly-278, 293-297 (KPTSS), and Arg-319 contribute to the FMN site.

This sequence belongs to the chorismate synthase family. As to quaternary structure, homotetramer. Requires FMNH2 as cofactor.

The catalysed reaction is 5-O-(1-carboxyvinyl)-3-phosphoshikimate = chorismate + phosphate. Its pathway is metabolic intermediate biosynthesis; chorismate biosynthesis; chorismate from D-erythrose 4-phosphate and phosphoenolpyruvate: step 7/7. Catalyzes the anti-1,4-elimination of the C-3 phosphate and the C-6 proR hydrogen from 5-enolpyruvylshikimate-3-phosphate (EPSP) to yield chorismate, which is the branch point compound that serves as the starting substrate for the three terminal pathways of aromatic amino acid biosynthesis. This reaction introduces a second double bond into the aromatic ring system. The polypeptide is Chorismate synthase (Klebsiella pneumoniae (strain 342)).